The sequence spans 85 residues: Cell division topological specificity factor (85 aa).

The protein belongs to the MinE family.

In terms of biological role, prevents the cell division inhibition by proteins MinC and MinD at internal division sites while permitting inhibition at polar sites. This ensures cell division at the proper site by restricting the formation of a division septum at the midpoint of the long axis of the cell. The chain is Cell division topological specificity factor from Dechloromonas aromatica (strain RCB).